Consider the following 316-residue polypeptide: Insulin-like growth factor-binding protein 2 (316 aa).

Residues 1–29 (MLPRLGGTALSLLPLLLLLLGTGGRGARA) form the signal peptide. Residues 31-126 (VLFRCPPCTP…VLGEGTCEKR (96 aa)) form the IGFBP N-terminal domain. 6 disulfide bridges follow: cysteine 35–cysteine 76, cysteine 38–cysteine 78, cysteine 46–cysteine 79, cysteine 68–cysteine 82, cysteine 90–cysteine 103, and cysteine 97–cysteine 123. The tract at residues 189-217 (QHRQMGKGGKHHLGLEEPKKLRPPPARTP) is disordered. In terms of domain architecture, Thyroglobulin type-1 spans 215-297 (RTPCQQELDQ…APTIRGDPEC (83 aa)). 3 disulfides stabilise this stretch: cysteine 218-cysteine 252, cysteine 263-cysteine 274, and cysteine 276-cysteine 297. Positions 292–294 (RGD) match the Cell attachment site motif.

In terms of assembly, interacts with IGF1. Interacts with IGF2. Interacts (via RGD motif) with integrin alpha5/ITGA5; this interaction induces cell migration, adhesion or apoptosis according to the context. Interacts with PTPRB; this interaction leads to PTPRB dimerization and inactivation. Post-translationally, cleaved by MMP9 leading to release of free IGF2 from IGFBP2-IGF2 complex, which contributes to enhance the motility and the growth of astrocytes. In terms of processing, O-glycosylated.

It is found in the secreted. May have both growth-inhibiting and growth-promoting effects, depending on tissue type; increases IGF-induced DNA synthesis in the uterine epithelium. IGF-binding proteins prolong the half-life of the IGFs and have been shown to either inhibit or stimulate the growth promoting effects of the IGFs on cell culture. They alter the interaction of IGFs with their cell surface receptors. In terms of biological role, multifunctional protein that plays a critical role in regulating the availability of IGFs such as IGF1 and IGF2 to their receptors and thereby regulates IGF-mediated cellular processes including proliferation, differentiation, and apoptosis in a cell-type specific manner. Functions coordinately with receptor protein tyrosine phosphatase beta/PTPRB and the IGF1 receptor to regulate IGF1-mediated signaling by stimulating the phosphorylation of PTEN leading to its inactivation and AKT1 activation. Plays a positive role in cell migration via interaction with integrin alpha5/ITGA5 through an RGD motif. Additionally, interaction with ITGA5/ITGB1 enhances the adhesion of endothelial progenitor cells to endothelial cells. Upon mitochondrial damage, facilitates apoptosis with ITGA5 of podocytes, and then activates the phosphorylation of focal adhesion kinase (FAK)-mediated mitochondrial injury. The protein is Insulin-like growth factor-binding protein 2 (IGFBP2) of Sus scrofa (Pig).